The sequence spans 560 residues: Oxygen-dependent choline dehydrogenase (560 aa).

8 to 37 contacts FAD; sequence DYIIIGAGSAGNVLATRLTEDADVSVLLLE. His475 (proton acceptor) is an active-site residue.

This sequence belongs to the GMC oxidoreductase family. FAD serves as cofactor.

The enzyme catalyses choline + A = betaine aldehyde + AH2. It catalyses the reaction betaine aldehyde + NAD(+) + H2O = glycine betaine + NADH + 2 H(+). Its pathway is amine and polyamine biosynthesis; betaine biosynthesis via choline pathway; betaine aldehyde from choline (cytochrome c reductase route): step 1/1. Functionally, involved in the biosynthesis of the osmoprotectant glycine betaine. Catalyzes the oxidation of choline to betaine aldehyde and betaine aldehyde to glycine betaine at the same rate. The chain is Oxygen-dependent choline dehydrogenase from Stenotrophomonas maltophilia (strain R551-3).